The chain runs to 120 residues: MISKIDKNKVRLKRHARVRNKLAGTAEKPRLNIYRSNKHIYAQVIDDVSGKTLAQASTQEKDLANESGSKVELSAKVGETVAKRASEKGVKTIVFDRGGYLYHGRVKALADAARENGLEF.

The protein belongs to the universal ribosomal protein uL18 family. Part of the 50S ribosomal subunit; part of the 5S rRNA/L5/L18/L25 subcomplex. Contacts the 5S and 23S rRNAs.

In terms of biological role, this is one of the proteins that bind and probably mediate the attachment of the 5S RNA into the large ribosomal subunit, where it forms part of the central protuberance. The chain is Large ribosomal subunit protein uL18 from Staphylococcus saprophyticus subsp. saprophyticus (strain ATCC 15305 / DSM 20229 / NCIMB 8711 / NCTC 7292 / S-41).